A 470-amino-acid polypeptide reads, in one-letter code: Cyclin-dependent kinase E-1 (470 aa).

Positions Y25 to F333 constitute a Protein kinase domain. ATP-binding positions include I31 to V39 and K55. Y36 carries the post-translational modification Phosphotyrosine. Catalysis depends on D154, which acts as the Proton acceptor. Residues L428–L470 are disordered. The span at V432 to Q448 shows a compositional bias: polar residues.

The protein belongs to the protein kinase superfamily. CMGC Ser/Thr protein kinase family. CDC2/CDKX subfamily. As to quaternary structure, interacts with MED14, HDA19 and LUG. Interacts with KIN10. As to expression, expressed in roots, leaves and stems. Expressed in young dividing tissue, such as shoot and root tips, lateral root primordia, young leaves and flowers. Expressed in the inflorescence meristem, inflorescence stem and young flowers.

It localises to the nucleus. The enzyme catalyses L-seryl-[protein] + ATP = O-phospho-L-seryl-[protein] + ADP + H(+). It carries out the reaction L-threonyl-[protein] + ATP = O-phospho-L-threonyl-[protein] + ADP + H(+). The catalysed reaction is [DNA-directed RNA polymerase] + ATP = phospho-[DNA-directed RNA polymerase] + ADP + H(+). In terms of biological role, involved in cell differentiation. Required for the specification of stamen and carpel identities and for the proper termination of stem cells in the floral meristem. The chain is Cyclin-dependent kinase E-1 (CDKE-1) from Arabidopsis thaliana (Mouse-ear cress).